Consider the following 490-residue polypeptide: Cobyric acid synthase (490 aa).

One can recognise a GATase cobBQ-type domain in the interval Arg252 to Ala439. Residue Cys333 is the Nucleophile of the active site. Residue His431 is part of the active site.

The protein belongs to the CobB/CobQ family. CobQ subfamily.

Its pathway is cofactor biosynthesis; adenosylcobalamin biosynthesis. Its function is as follows. Catalyzes amidations at positions B, D, E, and G on adenosylcobyrinic A,C-diamide. NH(2) groups are provided by glutamine, and one molecule of ATP is hydrogenolyzed for each amidation. The sequence is that of Cobyric acid synthase from Pseudomonas aeruginosa (strain LESB58).